Here is a 320-residue protein sequence, read N- to C-terminus: GTP 3',8-cyclase (320 aa).

Residues 5 to 225 (QFGRKINYLR…IQLIKKDEKA (221 aa)) form the Radical SAM core domain. Residue Arg14 participates in GTP binding. [4Fe-4S] cluster-binding residues include Cys21 and Cys25. Residue Tyr27 participates in S-adenosyl-L-methionine binding. A [4Fe-4S] cluster-binding site is contributed by Cys28. Arg64 lines the GTP pocket. S-adenosyl-L-methionine is bound at residue Gly68. Position 95 (Thr95) interacts with GTP. An S-adenosyl-L-methionine-binding site is contributed by Ser119. Lys155 serves as a coordination point for GTP. Met189 contributes to the S-adenosyl-L-methionine binding site. [4Fe-4S] cluster is bound by residues Cys248 and Cys251. 253 to 255 (RIR) serves as a coordination point for GTP. A [4Fe-4S] cluster-binding site is contributed by Cys265.

Belongs to the radical SAM superfamily. MoaA family. Monomer and homodimer. It depends on [4Fe-4S] cluster as a cofactor.

The catalysed reaction is GTP + AH2 + S-adenosyl-L-methionine = (8S)-3',8-cyclo-7,8-dihydroguanosine 5'-triphosphate + 5'-deoxyadenosine + L-methionine + A + H(+). The protein operates within cofactor biosynthesis; molybdopterin biosynthesis. In terms of biological role, catalyzes the cyclization of GTP to (8S)-3',8-cyclo-7,8-dihydroguanosine 5'-triphosphate. The chain is GTP 3',8-cyclase from Campylobacter jejuni (strain RM1221).